The following is an 83-amino-acid chain: MSGSTGERSFADIITSIRYWVIHSITIPSLFIAGWLFVSTGLAYDVFGSPRPNEYFTESRQGIPLITGRFDSLEQLNEFSRSF.

The chain crosses the membrane as a helical span at residues 21-35; the sequence is VIHSITIPSLFIAGW. Residue H23 coordinates heme.

Belongs to the PsbE/PsbF family. As to quaternary structure, heterodimer of an alpha subunit and a beta subunit. PSII is composed of 1 copy each of membrane proteins PsbA, PsbB, PsbC, PsbD, PsbE, PsbF, PsbH, PsbI, PsbJ, PsbK, PsbL, PsbM, PsbT, PsbX, PsbY, PsbZ, Psb30/Ycf12, at least 3 peripheral proteins of the oxygen-evolving complex and a large number of cofactors. It forms dimeric complexes. Heme b serves as cofactor.

Its subcellular location is the plastid. It localises to the chloroplast thylakoid membrane. In terms of biological role, this b-type cytochrome is tightly associated with the reaction center of photosystem II (PSII). PSII is a light-driven water:plastoquinone oxidoreductase that uses light energy to abstract electrons from H(2)O, generating O(2) and a proton gradient subsequently used for ATP formation. It consists of a core antenna complex that captures photons, and an electron transfer chain that converts photonic excitation into a charge separation. This is Cytochrome b559 subunit alpha from Citrus sinensis (Sweet orange).